The sequence spans 247 residues: UPF0273 protein PH0284 (247 aa).

In terms of domain architecture, KaiC spans 3 to 247; it reads RRVKTGIPGV…VLKRGKVLEL (245 aa). ATP is bound at residue 30 to 37; the sequence is GGPGTGKT.

The protein belongs to the UPF0273 family.

This is UPF0273 protein PH0284 from Pyrococcus horikoshii (strain ATCC 700860 / DSM 12428 / JCM 9974 / NBRC 100139 / OT-3).